Consider the following 49-residue polypeptide: SPbeta prophage-derived uncharacterized protein YoqT (49 aa).

A helical membrane pass occupies residues 7-29 (CFVNWSFDKIMDYILIAGLYFVF).

It is found in the cell membrane. The protein is SPbeta prophage-derived uncharacterized protein YoqT (yoqT) of Bacillus subtilis (strain 168).